Consider the following 180-residue polypeptide: UPF0398 protein YpsA (180 aa).

This sequence belongs to the UPF0398 family.

The sequence is that of UPF0398 protein YpsA (ypsA) from Bacillus subtilis (strain 168).